A 275-amino-acid polypeptide reads, in one-letter code: Light-independent protochlorophyllide reductase iron-sulfur ATP-binding protein (275 aa).

ATP-binding positions include 12-17 (GIGKST) and lysine 41. Mg(2+) is bound at residue serine 16. Positions 97 and 131 each coordinate [4Fe-4S] cluster. ATP is bound at residue 182–183 (NR).

The protein belongs to the NifH/BchL/ChlL family. In terms of assembly, homodimer. Protochlorophyllide reductase is composed of three subunits; BchL, BchN and BchB. It depends on [4Fe-4S] cluster as a cofactor.

It carries out the reaction chlorophyllide a + oxidized 2[4Fe-4S]-[ferredoxin] + 2 ADP + 2 phosphate = protochlorophyllide a + reduced 2[4Fe-4S]-[ferredoxin] + 2 ATP + 2 H2O. It participates in porphyrin-containing compound metabolism; bacteriochlorophyll biosynthesis (light-independent). In terms of biological role, component of the dark-operative protochlorophyllide reductase (DPOR) that uses Mg-ATP and reduced ferredoxin to reduce ring D of protochlorophyllide (Pchlide) to form chlorophyllide a (Chlide). This reaction is light-independent. The L component serves as a unique electron donor to the NB-component of the complex, and binds Mg-ATP. The sequence is that of Light-independent protochlorophyllide reductase iron-sulfur ATP-binding protein from Chlorobium phaeobacteroides (strain BS1).